Consider the following 243-residue polypeptide: Triosephosphate isomerase (243 aa).

9–11 provides a ligand contact to substrate; it reads NWK. The active-site Electrophile is His-98. Glu-167 serves as the catalytic Proton acceptor. Residues Gly-173, Ser-205, and 226–227 each bind substrate; that span reads GG.

The protein belongs to the triosephosphate isomerase family. In terms of assembly, homodimer.

It is found in the cytoplasm. It carries out the reaction D-glyceraldehyde 3-phosphate = dihydroxyacetone phosphate. It functions in the pathway carbohydrate biosynthesis; gluconeogenesis. The protein operates within carbohydrate degradation; glycolysis; D-glyceraldehyde 3-phosphate from glycerone phosphate: step 1/1. Its function is as follows. Involved in the gluconeogenesis. Catalyzes stereospecifically the conversion of dihydroxyacetone phosphate (DHAP) to D-glyceraldehyde-3-phosphate (G3P). This Mesomycoplasma hyorhinis (Mycoplasma hyorhinis) protein is Triosephosphate isomerase.